Reading from the N-terminus, the 396-residue chain is Argininosuccinate synthase (396 aa).

Residues 10–18 (AYSGGLDTS) and alanine 37 contribute to the ATP site. 2 residues coordinate L-citrulline: tyrosine 88 and serine 93. Residue glycine 118 coordinates ATP. 3 residues coordinate L-aspartate: threonine 120, asparagine 124, and aspartate 125. Asparagine 124 is a binding site for L-citrulline. Arginine 128, serine 176, serine 185, glutamate 261, and tyrosine 273 together coordinate L-citrulline.

Belongs to the argininosuccinate synthase family. Type 1 subfamily. In terms of assembly, homotetramer.

The protein localises to the cytoplasm. The catalysed reaction is L-citrulline + L-aspartate + ATP = 2-(N(omega)-L-arginino)succinate + AMP + diphosphate + H(+). It functions in the pathway amino-acid biosynthesis; L-arginine biosynthesis; L-arginine from L-ornithine and carbamoyl phosphate: step 2/3. In Nitratidesulfovibrio vulgaris (strain ATCC 29579 / DSM 644 / CCUG 34227 / NCIMB 8303 / VKM B-1760 / Hildenborough) (Desulfovibrio vulgaris), this protein is Argininosuccinate synthase.